A 183-amino-acid chain; its full sequence is Protein jagunal homolog 1-B (183 aa).

Topologically, residues 1–39 are cytoplasmic; that stretch reads MASRAGPRATGTDGSDYQHRERVASHYQMSVALKSEIKK. Residues 40–60 traverse the membrane as a helical segment; sequence LNIAHAVVWFLVAAQVLVSQL. Over 61–71 the chain is Lumenal; sequence NLVSHKVVASP. A helical transmembrane segment spans residues 72–92; that stretch reads YQWEYTYLLSIIPTVFSFMAL. Residues 93 to 99 lie on the Cytoplasmic side of the membrane; sequence PKNNISY. Residues 100–120 form a helical membrane-spanning segment; that stretch reads LVISMISGGLFCIGPILYGGM. The Lumenal portion of the chain corresponds to 121 to 137; sequence EMFPVAQQLYRHGKAYR. The chain crosses the membrane as a helical span at residues 138-158; the sequence is FIFGFSAVSIMYLVLIISVQV. At 159-183 the chain is on the cytoplasmic side; that stretch reads HGWQIYYSKKLLDAWFTNTQDKKKK.

This sequence belongs to the jagunal family.

The protein resides in the endoplasmic reticulum membrane. Functionally, endoplasmic reticulum transmembrane protein involved in vesicle-mediated transport, which is required for neutrophil function. The polypeptide is Protein jagunal homolog 1-B (jagn1b) (Danio rerio (Zebrafish)).